The sequence spans 247 residues: Fasciclin-like arabinogalactan protein 6 (247 aa).

A signal peptide spans 1–23; the sequence is MSSSLFSYVVLLIFLFTIPYIQS. The 147-residue stretch at 36-182 folds into the FAS1 domain; sequence PINLTAILEA…LAVYVVDSVL (147 aa). N-linked (GlcNAc...) asparagine glycans are attached at residues Asn-38, Asn-57, Asn-70, Asn-142, and Asn-153. Low complexity predominate over residues 192–212; that stretch reads TTPTGAPAPKSSTSSSDADSP. Residues 192–221 are disordered; it reads TTPTGAPAPKSSTSSSDADSPAADDEHKSA. Gly-222 is lipidated: GPI-anchor amidated glycine. The propeptide at 223–247 is removed in mature form; the sequence is SSVKRTSLGIVVSFALFCCSVIYIA.

This sequence belongs to the fasciclin-like AGP family.

It is found in the cell membrane. In terms of biological role, may be a cell surface adhesion protein. This is Fasciclin-like arabinogalactan protein 6 (FLA6) from Arabidopsis thaliana (Mouse-ear cress).